The sequence spans 485 residues: Malonate-semialdehyde dehydrogenase (485 aa).

Positions 155, 179, 182, 183, and 232 each coordinate NAD(+). Cysteine 287 serves as the catalytic Nucleophile. NAD(+) is bound at residue glutamate 386.

This sequence belongs to the aldehyde dehydrogenase family. IolA subfamily. Homotetramer.

The enzyme catalyses 3-oxopropanoate + NAD(+) + CoA + H2O = hydrogencarbonate + acetyl-CoA + NADH + H(+). It carries out the reaction 2-methyl-3-oxopropanoate + NAD(+) + CoA + H2O = propanoyl-CoA + hydrogencarbonate + NADH + H(+). Its pathway is polyol metabolism; myo-inositol degradation into acetyl-CoA; acetyl-CoA from myo-inositol: step 7/7. In terms of biological role, catalyzes the oxidation of malonate semialdehyde (MSA) and methylmalonate semialdehyde (MMSA) into acetyl-CoA and propanoyl-CoA, respectively. Is involved in a myo-inositol catabolic pathway. Bicarbonate, and not CO2, is the end-product of the enzymatic reaction. The sequence is that of Malonate-semialdehyde dehydrogenase from Halalkalibacterium halodurans (strain ATCC BAA-125 / DSM 18197 / FERM 7344 / JCM 9153 / C-125) (Bacillus halodurans).